A 322-amino-acid chain; its full sequence is SUMO-activating enzyme subunit 1A (322 aa).

N-acetylmethionine is present on Met1.

This sequence belongs to the ubiquitin-activating E1 family. In terms of assembly, heterodimer of SAE1A or SAE1B and SAE2. The complex binds SUMO proteins via SAE2.

Its subcellular location is the nucleus. Its pathway is protein modification; protein sumoylation. Its function is as follows. The dimeric enzyme acts as an E1 ligase for SUMO1 and SUMO2. It mediates ATP-dependent activation of SUMO proteins and formation of a thioester with a conserved cysteine residue on SAE2. Functionally redundant with its paralog SAE1B. This is SUMO-activating enzyme subunit 1A (SAE1A) from Arabidopsis thaliana (Mouse-ear cress).